We begin with the raw amino-acid sequence, 403 residues long: Nuclear receptor subfamily 2 group F member 5 (403 aa).

Residues 16–44 (PGSQLQMCSQEPGGTPGTPSGSTPGNDAL) form a disordered region. A DNA-binding region (nuclear receptor) is located at residues 51–126 (NVDCMVCGDK…VGMRREAVQR (76 aa)). NR C4-type zinc fingers lie at residues 54 to 74 (CMVC…CEGC) and 90 to 114 (CRGN…LKKC). An NR LBD domain is found at 152–378 (YLSGFISLLL…TLLRDMLLSG (227 aa)).

This sequence belongs to the nuclear hormone receptor family. NR2 subfamily.

It localises to the nucleus. Functionally, putative receptor that is required in photoreceptor cells precursors during eye development. The chain is Nuclear receptor subfamily 2 group F member 5 (nr2f5) from Danio rerio (Zebrafish).